We begin with the raw amino-acid sequence, 219 residues long: Putative GEM-like protein 8 (219 aa).

One can recognise a GRAM domain in the interval 96 to 174; that stretch reads KIYKRLFKVS…CKINGVNQSQ (79 aa).

This sequence belongs to the GEM family.

The sequence is that of Putative GEM-like protein 8 from Arabidopsis thaliana (Mouse-ear cress).